Consider the following 313-residue polypeptide: Homoserine O-succinyltransferase (313 aa).

Cys142 functions as the Acyl-thioester intermediate in the catalytic mechanism. Positions 163 and 192 each coordinate substrate. His235 (proton acceptor) is an active-site residue. Glu237 is an active-site residue. Residue Arg249 participates in substrate binding.

The protein belongs to the MetA family.

It is found in the cytoplasm. The enzyme catalyses L-homoserine + succinyl-CoA = O-succinyl-L-homoserine + CoA. Its pathway is amino-acid biosynthesis; L-methionine biosynthesis via de novo pathway; O-succinyl-L-homoserine from L-homoserine: step 1/1. In terms of biological role, transfers a succinyl group from succinyl-CoA to L-homoserine, forming succinyl-L-homoserine. The polypeptide is Homoserine O-succinyltransferase (Shewanella oneidensis (strain ATCC 700550 / JCM 31522 / CIP 106686 / LMG 19005 / NCIMB 14063 / MR-1)).